Consider the following 127-residue polypeptide: Glycine cleavage system H protein (127 aa).

A Lipoyl-binding domain is found at Thr24–Lys105. Lys65 is modified (N6-lipoyllysine).

The protein belongs to the GcvH family. The glycine cleavage system is composed of four proteins: P, T, L and H. It depends on (R)-lipoate as a cofactor.

In terms of biological role, the glycine cleavage system catalyzes the degradation of glycine. The H protein shuttles the methylamine group of glycine from the P protein to the T protein. This is Glycine cleavage system H protein from Chlorobaculum parvum (strain DSM 263 / NCIMB 8327) (Chlorobium vibrioforme subsp. thiosulfatophilum).